Reading from the N-terminus, the 269-residue chain is Tryptophan synthase alpha chain (269 aa).

Active-site proton acceptor residues include Glu-54 and Asp-65.

It belongs to the TrpA family. As to quaternary structure, tetramer of two alpha and two beta chains.

It carries out the reaction (1S,2R)-1-C-(indol-3-yl)glycerol 3-phosphate + L-serine = D-glyceraldehyde 3-phosphate + L-tryptophan + H2O. The protein operates within amino-acid biosynthesis; L-tryptophan biosynthesis; L-tryptophan from chorismate: step 5/5. In terms of biological role, the alpha subunit is responsible for the aldol cleavage of indoleglycerol phosphate to indole and glyceraldehyde 3-phosphate. The protein is Tryptophan synthase alpha chain of Synechococcus sp. (strain CC9902).